The following is a 396-amino-acid chain: MSVRLVLAKGREKSLLRRHPWVFSGAVARMEGKASLGETIDIVDHQGKWLARGAYSPASQIRARVWTFDPSESIDIAFFTRRLQQAQKWRDWLAQKDGLDSYRLIAGESDGLPGITIDRFGNFLVLQLLSAGAEYQRAALISVLQTLYPECAIYDRSDVAVRKKEGMELTQGPITGELPPALLPIEEHGMKLLVDIQHGHKTGYYLDQRDSRLATRRYVENKRVLNCFSYTGGFAVSALMGGCSQVVSVDTSHEALDIARQNVELNKLDLSKAEFVRDDVFKLLRTYRDRGEKFDVIVMDPPKFVENKSQLMGACRGYKDINMLAIQLLNEGGILLTFSCSGLMTSDLFQKIIADAAIDAGRDVQFIEQFRQAADHPVIATYPEGLYLKGFACRVM.

Residues 2–81 (SVRLVLAKGR…ESIDIAFFTR (80 aa)) form the PUA domain.

This sequence belongs to the methyltransferase superfamily. RlmI family.

It is found in the cytoplasm. It carries out the reaction cytidine(1962) in 23S rRNA + S-adenosyl-L-methionine = 5-methylcytidine(1962) in 23S rRNA + S-adenosyl-L-homocysteine + H(+). Specifically methylates the cytosine at position 1962 (m5C1962) of 23S rRNA. The polypeptide is Ribosomal RNA large subunit methyltransferase I (Escherichia coli O127:H6 (strain E2348/69 / EPEC)).